The primary structure comprises 480 residues: DNA repair protein RadA (480 aa).

The C4-type zinc finger occupies 10–27 (CSECRHVSAKWVGRCLEC). 95–102 (GDPGVGKS) contributes to the ATP binding site. Positions 254 to 258 (KNRFG) match the RadA KNRFG motif motif. The interval 353 to 480 (DIYLSTVGGM…TGHVPLGRGT (128 aa)) is lon-protease-like. Residues 459 to 480 (GTTLATPPSHSGTGHVPLGRGT) form a disordered region. Over residues 461–470 (TLATPPSHSG) the composition is skewed to polar residues.

The protein belongs to the RecA family. RadA subfamily.

DNA-dependent ATPase involved in processing of recombination intermediates, plays a role in repairing DNA breaks. Stimulates the branch migration of RecA-mediated strand transfer reactions, allowing the 3' invading strand to extend heteroduplex DNA faster. Binds ssDNA in the presence of ADP but not other nucleotides, has ATPase activity that is stimulated by ssDNA and various branched DNA structures, but inhibited by SSB. Does not have RecA's homology-searching function. The polypeptide is DNA repair protein RadA (Mycobacterium tuberculosis (strain CDC 1551 / Oshkosh)).